Consider the following 637-residue polypeptide: Chaperone protein DnaK (637 aa).

Thr203 carries the phosphothreonine; by autocatalysis modification. Residues 600–637 (SAVYGQQQEQGAPAQEEPSAEGKKNDDEGTVEGEFREV) are disordered. Residues 604 to 616 (GQQQEQGAPAQEE) are compositionally biased toward low complexity. Basic and acidic residues predominate over residues 619-637 (AEGKKNDDEGTVEGEFREV).

This sequence belongs to the heat shock protein 70 family.

Its function is as follows. Acts as a chaperone. The polypeptide is Chaperone protein DnaK (Dehalococcoides mccartyi (strain ATCC BAA-2266 / KCTC 15142 / 195) (Dehalococcoides ethenogenes (strain 195))).